Reading from the N-terminus, the 178-residue chain is Large ribosomal subunit protein uL6 (178 aa).

Belongs to the universal ribosomal protein uL6 family. As to quaternary structure, part of the 50S ribosomal subunit.

In terms of biological role, this protein binds to the 23S rRNA, and is important in its secondary structure. It is located near the subunit interface in the base of the L7/L12 stalk, and near the tRNA binding site of the peptidyltransferase center. In Corynebacterium urealyticum (strain ATCC 43042 / DSM 7109), this protein is Large ribosomal subunit protein uL6.